The following is a 211-amino-acid chain: MKFLSARDFHPVAFLGLMLVTTTAFPTSQVRRGDFTEDTTPNRPVYTTSQVGGLITHVLWEIVEMRKELCNGNSDCMNNDDALAENNLKLPEIQRNDGCYQTGYNQEICLLKISSGLLEYHSYLEYMKNNLKDNKKDKARVLQRDTETLIHIFNQEVKDLHKIVLPTPISNALLTDKLESQKEWLRTKTIQFILKSLEEFLKVTLRSTRQT.

The signal sequence occupies residues 1 to 24 (MKFLSARDFHPVAFLGLMLVTTTA). 2 disulfide bridges follow: Cys-70–Cys-76 and Cys-99–Cys-109.

This sequence belongs to the IL-6 superfamily. As to quaternary structure, component of a hexamer of two molecules each of IL6, IL6R and IL6ST; first binds to IL6R to associate with the signaling subunit IL6ST. Interacts with IL6R (via the N-terminal ectodomain); this interaction may be affected by IL6R-binding with SORL1, hence decreasing IL6 cis signaling. Interacts with SORL1 (via the N-terminal ectodomain); this interaction leads to IL6 internalization and lysosomal degradation. May form a trimeric complex with the soluble SORL1 ectodomain and soluble IL6R receptor; this interaction might stabilize circulating IL6, hence promoting IL6 trans signaling. N- and O-glycosylated. In terms of tissue distribution, expressed by dendritic cells and macrophages. Expressed by activated follicular B cells. Abundantly expressed in the central nervous system (CNS), particularly the hypothalamic region.

Its subcellular location is the secreted. Cytokine with a wide variety of biological functions in immunity, tissue regeneration, and metabolism. Binds to IL6R, then the complex associates to the signaling subunit IL6ST/gp130 to trigger the intracellular IL6-signaling pathway. The interaction with the membrane-bound IL6R and IL6ST stimulates 'classic signaling', whereas the binding of IL6 and soluble IL6R to IL6ST stimulates 'trans-signaling'. Alternatively, 'cluster signaling' occurs when membrane-bound IL6:IL6R complexes on transmitter cells activate IL6ST receptors on neighboring receiver cells. In terms of biological role, IL6 is a potent inducer of the acute phase response. Rapid production of IL6 contributes to host defense during infection and tissue injury, but excessive IL6 synthesis is involved in disease pathology. In the innate immune response, is synthesized by myeloid cells, such as macrophages and dendritic cells, upon recognition of pathogens through toll-like receptors (TLRs) at the site of infection or tissue injury. In the adaptive immune response, is required for the differentiation of B-cells into immunoglolin-secreting cells. Plays a major role in the differentiation of CD4(+) T cell subsets. Essential factor for the development of T follicular helper (Tfh) cells that are required for the induction of germinal-center formation. Together with IL21, controls the early generation of Tfh cells and are critical for an effective antibody response to acute viral infection. Required to drive naive CD4(+) T cells to the Th17 lineage, through 'cluster signaling' by dendritic cells. Also required for proliferation of myeloma cells and the survival of plasmablast cells. Its function is as follows. Acts as an essential factor in bone homeostasis and on vessels directly or indirectly by induction of VEGF, resulting in increased angiogenesis activity and vascular permeability. Induces, through 'trans-signaling' and synergistically with IL1B and TNF, the production of VEGF. Involved in metabolic controls, is discharged into the bloodstream after muscle contraction increasing lipolysis and improving insulin resistance. 'Trans-signaling' in central nervous system regulates energy and glucose homeostasis. Mediates, through GLP-1, crosstalk between insulin-sensitive tissues, intestinal L cells and pancreatic islets to adapt to changes in insulin demand. Also acts as a myokine. Plays a protective role during liver injury, being required for maintenance of tissue regeneration. Also has a pivotal role in iron metabolism by regulating HAMP/hepcidin expression upon inflammation or bacterial infection. Through activation of IL6ST-YAP-NOTCH pathway, induces inflammation-induced epithelial regeneration. The polypeptide is Interleukin-6 (Mus musculus (Mouse)).